The following is a 236-amino-acid chain: Small ribosomal subunit protein uS2c (236 aa).

It belongs to the universal ribosomal protein uS2 family.

It localises to the plastid. The protein resides in the chloroplast. The protein is Small ribosomal subunit protein uS2c (rps2) of Panax ginseng (Korean ginseng).